Reading from the N-terminus, the 213-residue chain is Thiamine-phosphate synthase (213 aa).

Residues 42 to 46 and aspartate 77 each bind 4-amino-2-methyl-5-(diphosphooxymethyl)pyrimidine; that span reads QYREK. 2 residues coordinate Mg(2+): aspartate 78 and aspartate 97. Serine 116 lines the 4-amino-2-methyl-5-(diphosphooxymethyl)pyrimidine pocket. 142–144 contacts 2-[(2R,5Z)-2-carboxy-4-methylthiazol-5(2H)-ylidene]ethyl phosphate; that stretch reads TIS. Lysine 145 is a binding site for 4-amino-2-methyl-5-(diphosphooxymethyl)pyrimidine. 2-[(2R,5Z)-2-carboxy-4-methylthiazol-5(2H)-ylidene]ethyl phosphate contacts are provided by residues glycine 173 and 193 to 194; that span reads IS.

The protein belongs to the thiamine-phosphate synthase family. It depends on Mg(2+) as a cofactor.

It carries out the reaction 2-[(2R,5Z)-2-carboxy-4-methylthiazol-5(2H)-ylidene]ethyl phosphate + 4-amino-2-methyl-5-(diphosphooxymethyl)pyrimidine + 2 H(+) = thiamine phosphate + CO2 + diphosphate. The catalysed reaction is 2-(2-carboxy-4-methylthiazol-5-yl)ethyl phosphate + 4-amino-2-methyl-5-(diphosphooxymethyl)pyrimidine + 2 H(+) = thiamine phosphate + CO2 + diphosphate. It catalyses the reaction 4-methyl-5-(2-phosphooxyethyl)-thiazole + 4-amino-2-methyl-5-(diphosphooxymethyl)pyrimidine + H(+) = thiamine phosphate + diphosphate. Its pathway is cofactor biosynthesis; thiamine diphosphate biosynthesis; thiamine phosphate from 4-amino-2-methyl-5-diphosphomethylpyrimidine and 4-methyl-5-(2-phosphoethyl)-thiazole: step 1/1. Its function is as follows. Condenses 4-methyl-5-(beta-hydroxyethyl)thiazole monophosphate (THZ-P) and 2-methyl-4-amino-5-hydroxymethyl pyrimidine pyrophosphate (HMP-PP) to form thiamine monophosphate (TMP). In Limosilactobacillus fermentum (strain NBRC 3956 / LMG 18251) (Lactobacillus fermentum), this protein is Thiamine-phosphate synthase.